The primary structure comprises 471 residues: MYPLNANSYTLLRKLGSGSFGVVWKARENVSGDIIAIKQIDLETGIDDITDIEQEVFMLSNCNSSNVIQYYGCFVDGYTLWILMEHMDGGSVSGLLKMGRLNEQVISIILREVLYGLNYLHGQNKIHRDIKAANILLSSSTGNVKLADFGVAAQLSNAASRRHTFVGTPFWMAPEVIQQTSYGLAADIWSLGITAIEMANGIPPRATMHPMRVIFEIPQSEPPKLDDHFSPTFRDFVSCCLDLNPNMRWSAKELLQHPFIKSAGTVKDIIPLLVQKENKLFDDSDQSVLEETINNTLKPFEEPIAEGNADIEDWTFETVKKSDSTVLGNTSIPKNSIISSQNKEELPSSIKYLEKTIMSDQATPHPFSKSLSEKGSSYHKSLTSDFAMKHYIKSTIRSMLLNDKLSATQRSSLESFYTSFISLDKNLSSKFVNQITPDNRLHHKKQKRSPISQLLFSRWLEETEKRRSLNG.

The 252-residue stretch at 9–260 (YTLLRKLGSG…AKELLQHPFI (252 aa)) folds into the Protein kinase domain. ATP is bound by residues 15-23 (LGSGSFGVV) and Lys-38. Asp-129 acts as the Proton acceptor in catalysis.

This sequence belongs to the protein kinase superfamily. STE Ser/Thr protein kinase family. STE20 subfamily. As to quaternary structure, interacts with cdc14.

Its subcellular location is the cytoplasm. The protein resides in the cytoskeleton. It is found in the microtubule organizing center. The protein localises to the spindle pole body. It carries out the reaction L-seryl-[protein] + ATP = O-phospho-L-seryl-[protein] + ADP + H(+). It catalyses the reaction L-threonyl-[protein] + ATP = O-phospho-L-threonyl-[protein] + ADP + H(+). Functionally, has a role in the septation initiation network (SIN) required for cytokinesis. This Schizosaccharomyces pombe (strain 972 / ATCC 24843) (Fission yeast) protein is Serine/threonine-protein kinase sid1 (sid1).